The sequence spans 706 residues: SPX domain-containing membrane protein Os09g0521800 (706 aa).

The 144-residue stretch at 2 to 145 (VNFSNKLTKD…GYKFTDYYVR (144 aa)) folds into the SPX domain. 6 helical membrane passes run 251-271 (MSLV…YIVV), 281-301 (LGAA…AQVF), 318-338 (LLFS…AFDL), 340-359 (SLTI…ARAV), 378-398 (AAFV…AGLL), and 414-434 (LPGW…WILF). Residues 475–498 (SEQDEEDDNGDEEHNETLSSSTTT) are disordered. Residues 476–488 (EQDEEDDNGDEEH) are compositionally biased toward acidic residues. 5 helical membrane passes run 520 to 540 (LLIY…SSVV), 554 to 574 (VFLA…GTYI), 583 to 603 (ILVA…KLTV), 611 to 631 (VCSA…NLSL), and 678 to 698 (LLNA…AATL).

Belongs to the major facilitator superfamily.

The protein localises to the membrane. The protein is SPX domain-containing membrane protein Os09g0521800 of Oryza sativa subsp. japonica (Rice).